The primary structure comprises 141 residues: Large ribosomal subunit protein uL11 (141 aa).

It belongs to the universal ribosomal protein uL11 family. Part of the ribosomal stalk of the 50S ribosomal subunit. Interacts with L10 and the large rRNA to form the base of the stalk. L10 forms an elongated spine to which L12 dimers bind in a sequential fashion forming a multimeric L10(L12)X complex. In terms of processing, one or more lysine residues are methylated.

Forms part of the ribosomal stalk which helps the ribosome interact with GTP-bound translation factors. This Nautilia profundicola (strain ATCC BAA-1463 / DSM 18972 / AmH) protein is Large ribosomal subunit protein uL11.